The sequence spans 201 residues: Pyridoxine/pyridoxamine 5'-phosphate oxidase (201 aa).

FMN contacts are provided by residues 45–50 (RMVLLK), 65–66 (YT), arginine 71, lysine 72, and glutamine 94. Position 50 (lysine 50) interacts with substrate. Residues tyrosine 112, arginine 116, and serine 120 each coordinate substrate. FMN-binding positions include 129–130 (QS) and tryptophan 174. 180–182 (RLH) contributes to the substrate binding site. Arginine 184 provides a ligand contact to FMN.

The protein belongs to the pyridoxamine 5'-phosphate oxidase family. As to quaternary structure, homodimer. It depends on FMN as a cofactor.

It carries out the reaction pyridoxamine 5'-phosphate + O2 + H2O = pyridoxal 5'-phosphate + H2O2 + NH4(+). It catalyses the reaction pyridoxine 5'-phosphate + O2 = pyridoxal 5'-phosphate + H2O2. The protein operates within cofactor metabolism; pyridoxal 5'-phosphate salvage; pyridoxal 5'-phosphate from pyridoxamine 5'-phosphate: step 1/1. It functions in the pathway cofactor metabolism; pyridoxal 5'-phosphate salvage; pyridoxal 5'-phosphate from pyridoxine 5'-phosphate: step 1/1. Catalyzes the oxidation of either pyridoxine 5'-phosphate (PNP) or pyridoxamine 5'-phosphate (PMP) into pyridoxal 5'-phosphate (PLP). This Rhodospirillum rubrum (strain ATCC 11170 / ATH 1.1.1 / DSM 467 / LMG 4362 / NCIMB 8255 / S1) protein is Pyridoxine/pyridoxamine 5'-phosphate oxidase.